The following is a 25-amino-acid chain: Insulin mimetic protein (25 aa).

Positions 1–25 (TKDPELKQCKKQQKKQQQYDDDDKK) are disordered.

Post-translationally, glycosylated. As to expression, expressed in seed.

The polypeptide is Insulin mimetic protein (Cnidoscolus quercifolius).